The chain runs to 215 residues: Nascent polypeptide-associated complex subunit alpha (215 aa).

The interval 1–81 (MPGEATETVP…SEKKARKAMS (81 aa)) is disordered. The segment covering 9-21 (VPVTEQEMQQPQV) has biased composition (polar residues). The span at 29–42 (SDSDDSVPELEEQD) shows a compositional bias: acidic residues. Over residues 43-57 (SAQTQTQQAQLAAAA) the composition is skewed to low complexity. Residues 70–135 (SRSEKKARKA…AKIEDLSQQA (66 aa)) enclose the NAC-A/B domain. Residues 176–213 (VEVKDIELVMSQANVSRAKAVRALKNNNNDIVNAIMEL) form the UBA domain.

The protein belongs to the NAC-alpha family.

Its function is as follows. May promote appropriate targeting of ribosome-nascent polypeptide complexes. This chain is Nascent polypeptide-associated complex subunit alpha (naca), found in Oreochromis niloticus (Nile tilapia).